Consider the following 93-residue polypeptide: Chromosomal protein MC1 (93 aa).

The tract at residues 1–43 (SNTRNFVLRDEEGNEHGVFTGKQPRQAALKAANRGDGTKSNPD) is disordered.

In terms of biological role, protects DNA against thermal denaturation and modulates transcription. The chain is Chromosomal protein MC1 from Methanosarcina barkeri.